The chain runs to 245 residues: 23S rRNA (guanosine-2'-O-)-methyltransferase RlmB (245 aa).

The S-adenosyl-L-methionine site is built by Gly-197, Ile-217, and Leu-226.

This sequence belongs to the class IV-like SAM-binding methyltransferase superfamily. RNA methyltransferase TrmH family. RlmB subfamily.

It is found in the cytoplasm. The catalysed reaction is guanosine(2251) in 23S rRNA + S-adenosyl-L-methionine = 2'-O-methylguanosine(2251) in 23S rRNA + S-adenosyl-L-homocysteine + H(+). Its function is as follows. Specifically methylates the ribose of guanosine 2251 in 23S rRNA. This Pasteurella multocida (strain Pm70) protein is 23S rRNA (guanosine-2'-O-)-methyltransferase RlmB.